Reading from the N-terminus, the 211-residue chain is Superoxide dismutase [Fe] (211 aa).

Residues His-34, His-85, Asp-171, and His-175 each contribute to the Fe cation site.

Belongs to the iron/manganese superoxide dismutase family. Requires Fe cation as cofactor.

The catalysed reaction is 2 superoxide + 2 H(+) = H2O2 + O2. In terms of biological role, destroys superoxide anion radicals which are normally produced within the cells and which are toxic to biological systems. This is Superoxide dismutase [Fe] (sod) from Acidianus ambivalens (Desulfurolobus ambivalens).